The sequence spans 234 residues: UPF0758 protein Smal_0281 (234 aa).

In terms of domain architecture, MPN spans 103 to 225 (VGNNPAAVGR…PVSFAERGLL (123 aa)). Zn(2+) contacts are provided by His174, His176, and Asp187. The short motif at 174 to 187 (HNHPSGDPEPSSAD) is the JAMM motif element.

This sequence belongs to the UPF0758 family.

The chain is UPF0758 protein Smal_0281 from Stenotrophomonas maltophilia (strain R551-3).